A 525-amino-acid polypeptide reads, in one-letter code: Ankyrin repeat domain-containing protein SOWAHC (525 aa).

The segment at 84–263 is disordered; sequence CEGPSEPSGD…EESSGGGSVT (180 aa). Position 88 is a phosphoserine (serine 88). Low complexity predominate over residues 101 to 112; it reads AEPEAPDGPAGP. Residues serine 126, serine 213, and serine 226 each carry the phosphoserine modification. Positions 230-241 are enriched in gly residues; the sequence is SSGGGRGRGGGD. Positions 242–251 are enriched in low complexity; it reads SDSASVASSS. 2 ANK repeats span residues 301–330 and 340–370; these read TGFT…KHQL and GGYT…DVDI. Positions 434-525 are disordered; the sequence is DGGDHHHHHH…TLRPKSNVFG (92 aa). The span at 468–477 shows a compositional bias: basic residues; the sequence is IKPRLNKIRF. The segment covering 489-509 has biased composition (basic and acidic residues); the sequence is RDPEQPLEGRGEEGVGEERPV.

This sequence belongs to the SOWAH family.

This Homo sapiens (Human) protein is Ankyrin repeat domain-containing protein SOWAHC (SOWAHC).